We begin with the raw amino-acid sequence, 100 residues long: Urease subunit gamma (100 aa).

The protein belongs to the urease gamma subunit family. Heterotrimer of UreA (gamma), UreB (beta) and UreC (alpha) subunits. Three heterotrimers associate to form the active enzyme.

Its subcellular location is the cytoplasm. The enzyme catalyses urea + 2 H2O + H(+) = hydrogencarbonate + 2 NH4(+). It participates in nitrogen metabolism; urea degradation; CO(2) and NH(3) from urea (urease route): step 1/1. This chain is Urease subunit gamma, found in Pseudoalteromonas translucida (strain TAC 125).